Consider the following 227-residue polypeptide: Ureidoacrylate amidohydrolase RutB (227 aa).

Catalysis depends on Asp22, which acts as the Proton acceptor. Lys131 is an active-site residue. Cys164 (nucleophile) is an active-site residue.

The protein belongs to the isochorismatase family. RutB subfamily.

The enzyme catalyses (Z)-3-ureidoacrylate + H2O + H(+) = (Z)-3-aminoacrylate + NH4(+) + CO2. The catalysed reaction is (Z)-3-ureidoacrylate + H2O = (Z)-3-aminoacrylate + carbamate + H(+). It catalyses the reaction (Z)-2-methylureidoacrylate + H2O + H(+) = (Z)-2-methylaminoacrylate + NH4(+) + CO2. Its function is as follows. Hydrolyzes ureidoacrylate to form aminoacrylate and carbamate. The carbamate hydrolyzes spontaneously, thereby releasing one of the nitrogen atoms of the pyrimidine ring as ammonia and one of its carbon atoms as CO2. This chain is Ureidoacrylate amidohydrolase RutB, found in Azorhizobium caulinodans (strain ATCC 43989 / DSM 5975 / JCM 20966 / LMG 6465 / NBRC 14845 / NCIMB 13405 / ORS 571).